The sequence spans 380 residues: Erythronate-4-phosphate dehydrogenase (380 aa).

Substrate is bound by residues serine 45 and threonine 66. NAD(+) is bound by residues 126–127 (QV), aspartate 146, threonine 174, 205–207 (ASR), and aspartate 231. The active site involves arginine 207. Residue glutamate 236 is part of the active site. Residue histidine 253 is the Proton donor of the active site. Residue glycine 256 participates in NAD(+) binding. Position 257 (tyrosine 257) interacts with substrate.

Belongs to the D-isomer specific 2-hydroxyacid dehydrogenase family. PdxB subfamily. As to quaternary structure, homodimer.

The protein localises to the cytoplasm. It carries out the reaction 4-phospho-D-erythronate + NAD(+) = (R)-3-hydroxy-2-oxo-4-phosphooxybutanoate + NADH + H(+). It functions in the pathway cofactor biosynthesis; pyridoxine 5'-phosphate biosynthesis; pyridoxine 5'-phosphate from D-erythrose 4-phosphate: step 2/5. Catalyzes the oxidation of erythronate-4-phosphate to 3-hydroxy-2-oxo-4-phosphonooxybutanoate. The protein is Erythronate-4-phosphate dehydrogenase of Pseudomonas syringae pv. tomato (strain ATCC BAA-871 / DC3000).